The sequence spans 687 residues: Mediator of RNA polymerase II transcription subunit 17 (687 aa).

Residues 30–43 (LSSNPNSSLHSPTS) show a composition bias toward low complexity. Disordered stretches follow at residues 30–70 (LSSN…NKTK) and 130–189 (QLGS…ETDD). 3 stretches are compositionally biased toward basic and acidic residues: residues 56–70 (TSIRLEGDELENKTK), 136–147 (SDGHNSEKKDTD), and 167–183 (KDNPVDSRNETDHKTNE).

Belongs to the Mediator complex subunit 17 family. Component of the Mediator complex, which is composed of at least 21 subunits that form three structurally distinct submodules. The Mediator head module contains MED6, MED8, MED11, SRB4/MED17, SRB5/MED18, ROX3/MED19, SRB2/MED20 and SRB6/MED22, the middle module contains MED1, MED4, NUT1/MED5, MED7, CSE2/MED9, NUT2/MED10, SRB7/MED21 and SOH1/MED31, and the tail module contains MED2, PGD1/MED3, RGR1/MED14, GAL11/MED15 and SIN4/MED16. The head and the middle modules interact directly with RNA polymerase II, whereas the elongated tail module interacts with gene-specific regulatory proteins. The head module may also interact with the TFIIF complex. SRB4/MED17 interacts directly with MED6, MED11, ROX3/MED19, SRB2/MED20 and SRB6/MED22. Interacts directly with the activator GAL4.

It localises to the nucleus. Component of the Mediator complex, a coactivator involved in the regulated transcription of nearly all RNA polymerase II-dependent genes. Mediator functions as a bridge to convey information from gene-specific regulatory proteins to the basal RNA polymerase II transcription machinery. The Mediator complex, having a compact conformation in its free form, is recruited to promoters by direct interactions with regulatory proteins and serves for the assembly of a functional preinitiation complex with RNA polymerase II and the general transcription factors. The Mediator complex unfolds to an extended conformation and partially surrounds RNA polymerase II, specifically interacting with the unphosphorylated form of the C-terminal domain (CTD) of RNA polymerase II. The Mediator complex dissociates from the RNA polymerase II holoenzyme and stays at the promoter when transcriptional elongation begins. This Saccharomyces cerevisiae (strain ATCC 204508 / S288c) (Baker's yeast) protein is Mediator of RNA polymerase II transcription subunit 17 (SRB4).